The chain runs to 262 residues: Small ribosomal subunit protein eS1 (262 aa).

Residues His-235–Ala-253 show a composition bias toward basic and acidic residues. Positions His-235 to Val-262 are disordered.

Belongs to the eukaryotic ribosomal protein eS1 family. In terms of assembly, component of the small ribosomal subunit. Mature ribosomes consist of a small (40S) and a large (60S) subunit. The 40S subunit contains about 33 different proteins and 1 molecule of RNA (18S). The 60S subunit contains about 49 different proteins and 3 molecules of RNA (28S, 5.8S and 5S).

It localises to the cytoplasm. This chain is Small ribosomal subunit protein eS1, found in Triatoma infestans (Assassin bug).